The sequence spans 129 residues: Succinate dehydrogenase subunit 3-2, mitochondrial (129 aa).

Residues 1-58 (MEKYQSKARFAPLSDAPFALRGALGSSNSSFNNIDHLRQSSSSGQARSYTSSPLGALR) constitute a mitochondrion transit peptide. Over residues 27 to 53 (SNSSFNNIDHLRQSSSSGQARSYTSSP) the composition is skewed to polar residues. The interval 27–66 (SNSSFNNIDHLRQSSSSGQARSYTSSPLGALRPKMFPSGN) is disordered. Position 87 (histidine 87) interacts with heme. Residues 105–127 (IFGAALGAVIISIPLATKFSLMF) form a helical membrane-spanning segment.

Component of complex II composed of eight subunits in plants: four classical SDH subunits SDH1, SDH2, SDH3 and SDH4 (a flavoprotein (FP), an iron-sulfur protein (IP), and a cytochrome b composed of a large and a small subunit.), as well as four subunits unknown in mitochondria from bacteria and heterotrophic eukaryotes. Requires heme as cofactor.

Its subcellular location is the mitochondrion inner membrane. The protein operates within carbohydrate metabolism; tricarboxylic acid cycle. Membrane-anchoring subunit of succinate dehydrogenase (SDH). This Oryza sativa subsp. japonica (Rice) protein is Succinate dehydrogenase subunit 3-2, mitochondrial.